The chain runs to 429 residues: Nicotinate phosphoribosyltransferase (429 aa).

Nicotinate contacts are provided by Y15, F177, and T229. A Phosphohistidine; by autocatalysis modification is found at H232. R294 is a binding site for nicotinate. T355 serves as a coordination point for 5-phospho-alpha-D-ribose 1-diphosphate.

This sequence belongs to the NAPRTase family. In terms of processing, transiently phosphorylated on a His residue during the reaction cycle. Phosphorylation strongly increases the affinity for substrates and increases the rate of nicotinate D-ribonucleotide production. Dephosphorylation regenerates the low-affinity form of the enzyme, leading to product release.

It is found in the cytoplasm. The protein localises to the nucleus. It catalyses the reaction nicotinate + 5-phospho-alpha-D-ribose 1-diphosphate + ATP + H2O = nicotinate beta-D-ribonucleotide + ADP + phosphate + diphosphate. It participates in cofactor biosynthesis; NAD(+) biosynthesis; nicotinate D-ribonucleotide from nicotinate: step 1/1. In terms of biological role, catalyzes the first step in the biosynthesis of NAD from nicotinic acid, the ATP-dependent synthesis of beta-nicotinate D-ribonucleotide from nicotinate and 5-phospho-D-ribose 1-phosphate. Essential for growth under anaerobic conditions. The polypeptide is Nicotinate phosphoribosyltransferase (NPT1) (Saccharomyces cerevisiae (strain ATCC 204508 / S288c) (Baker's yeast)).